The primary structure comprises 1024 residues: Beta-galactosidase (1024 aa).

Asn-103 and Asp-202 together coordinate substrate. Asp-202 contacts Na(+). Positions 417, 419, and 462 each coordinate Mg(2+). Substrate-binding positions include Glu-462 and 538–541; that span reads EYAH. Glu-462 functions as the Proton donor in the catalytic mechanism. Glu-538 (nucleophile) is an active-site residue. A Mg(2+)-binding site is contributed by Asn-598. Na(+) is bound by residues Phe-602 and Asn-605. The substrate site is built by Asn-605 and Trp-1000.

Belongs to the glycosyl hydrolase 2 family. Homotetramer. Mg(2+) serves as cofactor. The cofactor is Na(+).

It catalyses the reaction Hydrolysis of terminal non-reducing beta-D-galactose residues in beta-D-galactosides.. This is Beta-galactosidase from Escherichia coli (strain ATCC 8739 / DSM 1576 / NBRC 3972 / NCIMB 8545 / WDCM 00012 / Crooks).